The primary structure comprises 799 residues: DISARM protein DrmE (799 aa).

The protein resides in the cytoplasm. In terms of biological role, component of antiviral defense system DISARM (defense island system associated with restriction-modification), composed of DrmE, DrmA, DrmB, DrmC and DrmMII. DISARM is probably a multi-gene restriction module, this subunit has an unknown function. Expression of DISARM in B.subtilis (strain BEST7003) confers resistance to phages Nf, phi29, phi105, phi3T, SPO1, SPR and SPP1. Protection is over 10(7)-fold against phi3T, 10(4)-10(5)-fold against Nf, phi29, phi105 and SPR, 100-fold against SPO1 and 10-fold against SPP1. DISARM does not interfere with phage adsorption, but instead interferes with (phi3T) DNA replication early in its cycle, preventing replication, circularization and lysogeny and probably causes phage DNA degradation (DNA is degraded in SPP1-infected cells). The chain is DISARM protein DrmE from Bacillus paralicheniformis (strain ATCC 9945a / NCIMB 11709 / CD-2).